The sequence spans 553 residues: Formate--tetrahydrofolate ligase (553 aa).

ATP is bound at residue Thr-62 to Ser-69.

This sequence belongs to the formate--tetrahydrofolate ligase family.

The catalysed reaction is (6S)-5,6,7,8-tetrahydrofolate + formate + ATP = (6R)-10-formyltetrahydrofolate + ADP + phosphate. Its pathway is one-carbon metabolism; tetrahydrofolate interconversion. In Pediococcus pentosaceus (strain ATCC 25745 / CCUG 21536 / LMG 10740 / 183-1w), this protein is Formate--tetrahydrofolate ligase.